A 124-amino-acid polypeptide reads, in one-letter code: uncharacterized protein (124 aa).

This is an uncharacterized protein from Saccharomyces cerevisiae (strain ATCC 204508 / S288c) (Baker's yeast).